The following is a 293-amino-acid chain: Pseudouridine-5'-phosphate glycosidase (293 aa).

Glutamate 21 acts as the Proton donor in catalysis. Residues lysine 81 and valine 101 each coordinate substrate. Mn(2+) is bound at residue aspartate 130. A substrate-binding site is contributed by 132 to 134; the sequence is SQD. The active-site Nucleophile is the lysine 151.

The protein belongs to the pseudouridine-5'-phosphate glycosidase family. As to quaternary structure, homotrimer. It depends on Mn(2+) as a cofactor.

The catalysed reaction is D-ribose 5-phosphate + uracil = psi-UMP + H2O. Functionally, catalyzes the reversible cleavage of pseudouridine 5'-phosphate (PsiMP) to ribose 5-phosphate and uracil. Functions biologically in the cleavage direction, as part of a pseudouridine degradation pathway. This is Pseudouridine-5'-phosphate glycosidase from Thermosipho africanus (strain TCF52B).